Here is a 424-residue protein sequence, read N- to C-terminus: Anaerobic glycerol-3-phosphate dehydrogenase subunit B (424 aa).

The protein belongs to the anaerobic G-3-P dehydrogenase subunit B family. As to quaternary structure, composed of a catalytic GlpA/B dimer and of membrane bound GlpC. FMN is required as a cofactor.

It carries out the reaction a quinone + sn-glycerol 3-phosphate = dihydroxyacetone phosphate + a quinol. The protein operates within polyol metabolism; glycerol degradation via glycerol kinase pathway; glycerone phosphate from sn-glycerol 3-phosphate (anaerobic route): step 1/1. Its function is as follows. Conversion of glycerol 3-phosphate to dihydroxyacetone. Uses fumarate or nitrate as electron acceptor. The sequence is that of Anaerobic glycerol-3-phosphate dehydrogenase subunit B from Yersinia pestis bv. Antiqua (strain Antiqua).